The chain runs to 316 residues: Putative S-adenosyl-L-methionine-dependent methyltransferase MAB_4606c (316 aa).

Residues Asp137 and 166-167 (DL) contribute to the S-adenosyl-L-methionine site.

It belongs to the UPF0677 family.

In terms of biological role, exhibits S-adenosyl-L-methionine-dependent methyltransferase activity. The sequence is that of Putative S-adenosyl-L-methionine-dependent methyltransferase MAB_4606c from Mycobacteroides abscessus (strain ATCC 19977 / DSM 44196 / CCUG 20993 / CIP 104536 / JCM 13569 / NCTC 13031 / TMC 1543 / L948) (Mycobacterium abscessus).